The following is a 91-amino-acid chain: PqqA binding protein (91 aa).

It belongs to the PqqD family. Monomer. Interacts with PqqE.

The protein operates within cofactor biosynthesis; pyrroloquinoline quinone biosynthesis. Functionally, functions as a PqqA binding protein and presents PqqA to PqqE, in the pyrroloquinoline quinone (PQQ) biosynthetic pathway. This is PqqA binding protein from Pseudomonas fluorescens (strain ATCC BAA-477 / NRRL B-23932 / Pf-5).